The sequence spans 281 residues: Elongation factor Ts (281 aa).

Residues Thr-80 to Val-83 are involved in Mg(2+) ion dislocation from EF-Tu.

The protein belongs to the EF-Ts family.

It localises to the cytoplasm. Its function is as follows. Associates with the EF-Tu.GDP complex and induces the exchange of GDP to GTP. It remains bound to the aminoacyl-tRNA.EF-Tu.GTP complex up to the GTP hydrolysis stage on the ribosome. This chain is Elongation factor Ts, found in Vibrio atlanticus (strain LGP32) (Vibrio splendidus (strain Mel32)).